A 425-amino-acid chain; its full sequence is E3 ubiquitin-protein ligase TRIM31 (425 aa).

Residues 16-57 form an RING-type zinc finger; that stretch reads CPICLDILQKPVTIDCGHNFCLKCITQIGETSCGFFKCPLCK. The B box-type zinc finger occupies 90-131; that stretch reads RKEATCPRHQEMFHYFCEDDGKFLCFVCRESKDHKSHNVSLI. Zn(2+) is bound by residues Cys-95, His-98, Cys-117, and His-123. Coiled-coil stretches lie at residues 126–162 and 270–307; these read HNVSLIEEAAQNYQGQIQEQIQVLQQKEKETVQVKAQ and LELEKKLSEAKSRHDSITGSLKKFKDQLQADRKKDENR. Positions 328–360 are disordered; sequence HKMNKTSEPGSSSAGGRTTSGPPNHHSSAPSHS. Residues 336-360 are compositionally biased toward low complexity; sequence PGSSSAGGRTTSGPPNHHSSAPSHS.

It belongs to the TRIM/RBCC family. As to quaternary structure, may form oligomers. Interacts with isoform p52shc of SHC1. In terms of processing, auto-ubiquitinated (in vitro). Up-regulated in gastric adenocarcinomas.

Its subcellular location is the cytoplasm. The protein localises to the mitochondrion. The enzyme catalyses S-ubiquitinyl-[E2 ubiquitin-conjugating enzyme]-L-cysteine + [acceptor protein]-L-lysine = [E2 ubiquitin-conjugating enzyme]-L-cysteine + N(6)-ubiquitinyl-[acceptor protein]-L-lysine.. It participates in protein modification; protein ubiquitination. E3 ubiquitin-protein ligase that acts as a regulator of antiviral immune response and inflammation by mediating ubiquitination of substrates. Acts as a regulator of innate immune defense against viruses by mediating 'Lys-63'-linked ubiquitination of MAVS, promoting MAVS polymerization and formation of three-stranded helical filaments on mitochondria. Acts as a negative regulator of the NLRP3 inflammasome by catalyzing 'Lys-48'-linked ubiquitination of NLRP3, leading to its degradation. Regulator of Src-induced anchorage independent cell growth. The polypeptide is E3 ubiquitin-protein ligase TRIM31 (Homo sapiens (Human)).